Consider the following 305-residue polypeptide: ATP synthase gamma chain (305 aa).

This sequence belongs to the ATPase gamma chain family. In terms of assembly, F-type ATPases have 2 components, CF(1) - the catalytic core - and CF(0) - the membrane proton channel. CF(1) has five subunits: alpha(3), beta(3), gamma(1), delta(1), epsilon(1). CF(0) has three main subunits: a, b and c.

The protein resides in the cell membrane. Its function is as follows. Produces ATP from ADP in the presence of a proton gradient across the membrane. The gamma chain is believed to be important in regulating ATPase activity and the flow of protons through the CF(0) complex. The chain is ATP synthase gamma chain from Mycobacterium tuberculosis (strain ATCC 25177 / H37Ra).